Consider the following 266-residue polypeptide: Hydroxypyruvate/pyruvate aldolase (266 aa).

H48 functions as the Proton acceptor in the catalytic mechanism. Positions 152 and 178 each coordinate a divalent metal cation.

Belongs to the HpcH/HpaI aldolase family. A divalent metal cation serves as cofactor.

The catalysed reaction is D-glyceraldehyde + pyruvate = 2-dehydro-3-deoxy-L-galactonate. It carries out the reaction 2-dehydro-3-deoxy-D-gluconate = D-glyceraldehyde + pyruvate. Aldolase which can catalyze in vitro the aldolisation reaction between hydroxypyruvate (HPA) or pyruvate (PA) and D-glyceraldehyde (D-GA). The condensation of pyruvate and D-glyceraldehyde produces 2-dehydro-3-deoxy-L-galactonate as the major product and 2-dehydro-3-deoxy-D-gluconate. Has weak activity with hydroxypyruvate and D-glyceraldehyde. This is Hydroxypyruvate/pyruvate aldolase from Agrobacterium fabrum (strain C58 / ATCC 33970) (Agrobacterium tumefaciens (strain C58)).